Here is a 150-residue protein sequence, read N- to C-terminus: Arginine repressor (150 aa).

This sequence belongs to the ArgR family.

Its subcellular location is the cytoplasm. Its pathway is amino-acid biosynthesis; L-arginine biosynthesis [regulation]. Functionally, regulates arginine biosynthesis genes. This chain is Arginine repressor, found in Desulfitobacterium hafniense (strain DSM 10664 / DCB-2).